The following is a 253-amino-acid chain: Probable transcriptional regulatory protein Tlet_1011 (253 aa).

Belongs to the TACO1 family.

It is found in the cytoplasm. The polypeptide is Probable transcriptional regulatory protein Tlet_1011 (Pseudothermotoga lettingae (strain ATCC BAA-301 / DSM 14385 / NBRC 107922 / TMO) (Thermotoga lettingae)).